Consider the following 132-residue polypeptide: Small ribosomal subunit protein uS8 (132 aa).

This sequence belongs to the universal ribosomal protein uS8 family. As to quaternary structure, part of the 30S ribosomal subunit. Contacts proteins S5 and S12.

In terms of biological role, one of the primary rRNA binding proteins, it binds directly to 16S rRNA central domain where it helps coordinate assembly of the platform of the 30S subunit. This is Small ribosomal subunit protein uS8 from Francisella philomiragia subsp. philomiragia (strain ATCC 25017 / CCUG 19701 / FSC 153 / O#319-036).